Reading from the N-terminus, the 261-residue chain is Indole-3-glycerol phosphate synthase (261 aa).

This sequence belongs to the TrpC family.

It carries out the reaction 1-(2-carboxyphenylamino)-1-deoxy-D-ribulose 5-phosphate + H(+) = (1S,2R)-1-C-(indol-3-yl)glycerol 3-phosphate + CO2 + H2O. The protein operates within amino-acid biosynthesis; L-tryptophan biosynthesis; L-tryptophan from chorismate: step 4/5. The protein is Indole-3-glycerol phosphate synthase of Burkholderia multivorans (strain ATCC 17616 / 249).